Here is a 1010-residue protein sequence, read N- to C-terminus: Retinoblastoma-related protein 1 (1010 aa).

Positions 1 to 23 (MEGAAPPASSGSEVTGAGSGKVD) are disordered. The interval 419 to 619 (TPVSTAMTTA…EKGSSMYNSL (201 aa)) is domain A. Positions 419 to 861 (TPVSTAMTTA…NEVFIPTVKP (443 aa)) are pocket. A spacer region spans residues 620-730 (IVARPTLSAE…PAAGGELCAE (111 aa)). The interval 657 to 679 (LPPLPFQKQEHSPDKDEVRSPKR) is disordered. Over residues 664-679 (KQEHSPDKDEVRSPKR) the composition is skewed to basic and acidic residues. The segment at 731-861 (TGIGVFLSKI…NEVFIPTVKP (131 aa)) is domain B. The segment at 868–898 (SGTSPNKKNEEKCAADGPYPESPRLSRFPNL) is disordered.

Belongs to the retinoblastoma protein (RB) family.

It localises to the nucleus. In terms of biological role, regulator of biological processes that recruits a histone deacetylase to control gene transcription. May play a role in the entry into mitosis, negatively regulating the cell proliferation. Formation of stable complexes with geminiviridae replication-associated proteins may create a cellular environment which favors viral DNA replication. This chain is Retinoblastoma-related protein 1 (RBR1), found in Oryza sativa subsp. japonica (Rice).